Consider the following 338-residue polypeptide: Ketol-acid reductoisomerase (NADP(+)) (338 aa).

The KARI N-terminal Rossmann domain maps to 1-181 (MKVFYDKDAD…GGGRAGIIET (181 aa)). NADP(+) contacts are provided by residues 24–27 (YGSQ), Arg47, and Ser52. His107 is a catalytic residue. An NADP(+)-binding site is contributed by Gly133. Positions 182–327 (NFREETETDL…SKLRAMMPWI (146 aa)) constitute a KARI C-terminal knotted domain. Residues Asp190, Glu194, Glu226, and Glu230 each contribute to the Mg(2+) site. Ser251 contributes to the substrate binding site.

Belongs to the ketol-acid reductoisomerase family. Mg(2+) serves as cofactor.

It catalyses the reaction (2R)-2,3-dihydroxy-3-methylbutanoate + NADP(+) = (2S)-2-acetolactate + NADPH + H(+). The catalysed reaction is (2R,3R)-2,3-dihydroxy-3-methylpentanoate + NADP(+) = (S)-2-ethyl-2-hydroxy-3-oxobutanoate + NADPH + H(+). The protein operates within amino-acid biosynthesis; L-isoleucine biosynthesis; L-isoleucine from 2-oxobutanoate: step 2/4. Its pathway is amino-acid biosynthesis; L-valine biosynthesis; L-valine from pyruvate: step 2/4. Functionally, involved in the biosynthesis of branched-chain amino acids (BCAA). Catalyzes an alkyl-migration followed by a ketol-acid reduction of (S)-2-acetolactate (S2AL) to yield (R)-2,3-dihydroxy-isovalerate. In the isomerase reaction, S2AL is rearranged via a Mg-dependent methyl migration to produce 3-hydroxy-3-methyl-2-ketobutyrate (HMKB). In the reductase reaction, this 2-ketoacid undergoes a metal-dependent reduction by NADPH to yield (R)-2,3-dihydroxy-isovalerate. The protein is Ketol-acid reductoisomerase (NADP(+)) of Burkholderia mallei (strain NCTC 10229).